Reading from the N-terminus, the 294-residue chain is Protein ATC1/LIC4 (294 aa).

The disordered stretch occupies residues 114 to 178 (YTGKASLDKS…SSSLASSDAN (65 aa)). A compositionally biased stretch (basic and acidic residues) spans 130–145 (HKPDKEQKNYKIDKPT). Residues 153–175 (LKTTNEPMLSPASLSPSSSLASS) are compositionally biased toward low complexity.

The protein resides in the cytoplasm. It is found in the nucleus. Functionally, involved in cation homeostasis and in the regulation of the cation stress signaling cascades. Also involved in bipolar budding. This Saccharomyces cerevisiae (strain ATCC 204508 / S288c) (Baker's yeast) protein is Protein ATC1/LIC4 (ATC1).